Reading from the N-terminus, the 155-residue chain is 3-dehydroquinate dehydratase (155 aa).

Catalysis depends on Tyr-32, which acts as the Proton acceptor. Residues Asn-84, His-90, and Asp-97 each contribute to the substrate site. The active-site Proton donor is the His-110. Residues Leu-111–Ser-112 and Arg-121 each bind substrate.

This sequence belongs to the type-II 3-dehydroquinase family. Homododecamer.

The catalysed reaction is 3-dehydroquinate = 3-dehydroshikimate + H2O. It functions in the pathway metabolic intermediate biosynthesis; chorismate biosynthesis; chorismate from D-erythrose 4-phosphate and phosphoenolpyruvate: step 3/7. In terms of biological role, catalyzes a trans-dehydration via an enolate intermediate. The polypeptide is 3-dehydroquinate dehydratase (Ralstonia pickettii (strain 12J)).